The primary structure comprises 1411 residues: Regulating synaptic membrane exocytosis protein 2 (1411 aa).

A disordered region spans residues methionine 1 to threonine 33. Positions methionine 26–serine 185 constitute a RabBD domain. Residues lysine 117 to glutamate 173 form an FYVE-type zinc finger. Residues cysteine 123, cysteine 126, cysteine 139, cysteine 142, cysteine 147, cysteine 150, cysteine 165, and cysteine 168 each contribute to the Zn(2+) site. 6 stretches are compositionally biased toward basic and acidic residues: residues asparagine 203–glutamate 216, aspartate 273–tyrosine 287, aspartate 318–arginine 329, arginine 348–serine 366, glutamate 382–aspartate 401, and glutamate 410–alanine 434. Disordered stretches follow at residues asparagine 203 to glutamine 598 and serine 623 to serine 650. Position 400 is a phosphoserine (serine 400). The segment covering glycine 451–serine 463 has biased composition (polar residues). Basic and acidic residues predominate over residues aspartate 475 to aspartate 492. Polar residues predominate over residues arginine 510–serine 521. Over residues lysine 528–lysine 537 the composition is skewed to basic residues. The span at serine 558–serine 568 shows a compositional bias: acidic residues. Basic and acidic residues-rich tracts occupy residues valine 569 to serine 583 and asparagine 634 to proline 644. Residues aspartate 668 to arginine 754 enclose the PDZ domain. Threonine 689 bears the Phosphothreonine mark. The disordered stretch occupies residues isoleucine 762–methionine 793. Residues serine 791 and serine 794 each carry the phosphoserine modification. Positions leucine 805–tyrosine 928 constitute a C2 1 domain. 2 disordered regions span residues proline 939–serine 973 and aspartate 993–threonine 1190. Composition is skewed to polar residues over residues leucine 994–glycine 1015 and arginine 1049–serine 1059. The segment covering arginine 1060–aspartate 1113 has biased composition (basic and acidic residues). Polar residues predominate over residues glycine 1143–proline 1153. Position 1148 is a phosphoserine (serine 1148). The C2 2 domain maps to alanine 1257 to phenylalanine 1375. Residues serine 1396 and serine 1399 each carry the phosphoserine modification.

Interacts with RAB3A and RAB3B that have been activated by GTP-binding. Interacts with RAB3C, RAB3D and RAB26. Interacts with TSPOAP1 and RIMBP2. Interacts with PPFIA3 and PPFIA4. Interacts via its zinc finger with the first C2 domain of UNC13A. Forms a complex consisting of UNC13A, RIMS2 and RAB3A. Heterodimer with PCLO. Part of a ternary complex involving PCLO and EPAC2. In terms of tissue distribution, widely expressed. Expressed in melanocytes. In fetal tissues, predominantly expressed in the brain. In the retina, expressed in the outer plexiform layer (at protein level). In the cerebellum, expressed in Purkinje cells (at protein level). In the pancreas, expressed in Langerhans islets (at protein level).

The protein localises to the cell membrane. Its subcellular location is the synapse. It localises to the presynaptic cell membrane. Functionally, rab effector involved in exocytosis. May act as scaffold protein. Plays a role in dendrite formation by melanocytes. In Homo sapiens (Human), this protein is Regulating synaptic membrane exocytosis protein 2 (RIMS2).